Consider the following 640-residue polypeptide: Protelomerase (640 aa).

DNA-binding residues include Arg-275, Lys-300, Arg-383, and His-416. Catalysis depends on Tyr-425, which acts as the Nucleophile. A compositionally biased stretch (acidic residues) spans 545–585 (VDLDDENHDDETLDDDEIEVDESEGEELEEAGDAEEAEVAE). The interval 545 to 605 (VDLDDENHDD…FKAPRDNGDG (61 aa)) is disordered.

It belongs to the Caudoviricetes Protelomerase family. As to quaternary structure, monomer. Homodimer; in presence of DNA.

Its function is as follows. Converts the circular intermediates produced by the viral replication and carrying a joined telomere site to a linear DNA molecule with covalently closed hairpin ends. The viral circular DNA is cleaved at a palindromic site called telRL thereby generating a linear prophage plasmid with telomeres. Binds covalently to the 3'-phosphoryl of the cleaved strands. In Klebsiella oxytoca (Bacteriophage phiKO2), this protein is Protelomerase.